The chain runs to 379 residues: Probable purine permease 11 (379 aa).

Transmembrane regions (helical) follow at residues 43–63, 76–96, 114–134, 144–164, 167–187, 203–223, 239–259, 294–313, 314–330, and 334–354; these read WVLV…SVLL, WMAT…LLLL, IVLI…LYSV, YSLI…FINA, FTAL…LIAL, IVGF…LSLM, VLEM…IGLF, VCSV…FSNV, ISTL…LVVF, and MSGV…SYVY.

It belongs to the purine permeases (TC 2.A.7.14) family. May form a complex with the potassium channel subunit KAT1.

The protein localises to the membrane. The sequence is that of Probable purine permease 11 (PUP11) from Arabidopsis thaliana (Mouse-ear cress).